Here is a 620-residue protein sequence, read N- to C-terminus: Protein VERNALIZATION INSENSITIVE 3 (620 aa).

Residues Arg148–Asp206 form a PHD-type zinc finger. The short motif at Trp213–Ala220 is the Nuclear localization signal element. The Fibronectin type-III domain maps to Asp314 to Asp412. Positions Asp411–Val466 are disordered. The segment covering Asp418–Ser435 has biased composition (polar residues). A Nuclear localization signal motif is present at residues Cys493–Gly500. The interval Thr512–His620 is VIN3-Interacting Domain (VID).

In terms of assembly, interacts with VIL1 and VIL2. The heterodimer made of VIN3 and VIL1 is required for establishing the vernalization-induced epigenetic silencing of FLC. Component of the plant homeodomain / polycomb repressive complex 2 (PHD-PRC2) large complex during prolonged cold, composed of core PRC2 components (VRN2, EZA1, FIE and MSI1), and three related PHD finger proteins (VIL1, VIL2 and VIN3) that mediates histone H3 trimethylation on 'Lys-27' (H3K27me3). Expressed in shoot and root apices. Displays the same pattern of expression as FLC.

The protein localises to the nucleus. It localises to the nucleus speckle. In terms of biological role, plays a central role in vernalization by mediating the initial transcriptional repression of the homeotic gene FLC, a floral repressor, after a cold treatment. However, due to its transient expression, it cannot maintain repression of FLC, which is then maintained by Polycomb Group complexes containing VRN2 throughout development. Required to deacetylate histones on the FLC promoter. Together with VIL1, required during vernalization for the modifications of FLC and FLM chromatin that are associated with an epigenetically silenced state (e.g. chromatin modifications, histone deacetylation, and trimethylated H3 'Lys-4' H3K4me3 and 'Lys-27' H3K27me3) and with acquisition of competence to flower. The sequence is that of Protein VERNALIZATION INSENSITIVE 3 (VIN3) from Arabidopsis thaliana (Mouse-ear cress).